Here is a 545-residue protein sequence, read N- to C-terminus: Ribulokinase (545 aa).

It belongs to the ribulokinase family.

It carries out the reaction D-ribulose + ATP = D-ribulose 5-phosphate + ADP + H(+). The catalysed reaction is L-ribulose + ATP = L-ribulose 5-phosphate + ADP + H(+). Its pathway is carbohydrate degradation; L-arabinose degradation via L-ribulose; D-xylulose 5-phosphate from L-arabinose (bacterial route): step 2/3. The polypeptide is Ribulokinase (Staphylococcus aureus (strain MRSA252)).